The following is a 217-amino-acid chain: Ribosomal RNA small subunit methyltransferase G (217 aa).

Residues glycine 78, phenylalanine 83, 129-130 (AE), and arginine 146 each bind S-adenosyl-L-methionine.

The protein belongs to the methyltransferase superfamily. RNA methyltransferase RsmG family.

It is found in the cytoplasm. The enzyme catalyses guanosine(527) in 16S rRNA + S-adenosyl-L-methionine = N(7)-methylguanosine(527) in 16S rRNA + S-adenosyl-L-homocysteine. Its function is as follows. Specifically methylates the N7 position of guanine in position 527 of 16S rRNA. The protein is Ribosomal RNA small subunit methyltransferase G of Geobacter sp. (strain M21).